A 282-amino-acid chain; its full sequence is uncharacterized protein (282 aa).

The 77-residue stretch at 2–78 folds into the HTH rpiR-type domain; it reads TDVLAVIREM…IKIAVSLAKQ (77 aa). Residues 38-57 constitute a DNA-binding region (H-T-H motif); sequence VNELANACDTSEASIIRFCR. The region spanning 122–262 is the SIS domain; the sequence is AAEALANANK…FILVAQKKYN (141 aa).

This is an uncharacterized protein from Caldanaerobacter subterraneus subsp. tengcongensis (strain DSM 15242 / JCM 11007 / NBRC 100824 / MB4) (Thermoanaerobacter tengcongensis).